A 250-amino-acid chain; its full sequence is 3-deoxy-manno-octulosonate cytidylyltransferase (250 aa).

This sequence belongs to the KdsB family.

It is found in the cytoplasm. It carries out the reaction 3-deoxy-alpha-D-manno-oct-2-ulosonate + CTP = CMP-3-deoxy-beta-D-manno-octulosonate + diphosphate. It functions in the pathway nucleotide-sugar biosynthesis; CMP-3-deoxy-D-manno-octulosonate biosynthesis; CMP-3-deoxy-D-manno-octulosonate from 3-deoxy-D-manno-octulosonate and CTP: step 1/1. It participates in bacterial outer membrane biogenesis; lipopolysaccharide biosynthesis. Activates KDO (a required 8-carbon sugar) for incorporation into bacterial lipopolysaccharide in Gram-negative bacteria. The chain is 3-deoxy-manno-octulosonate cytidylyltransferase from Janthinobacterium sp. (strain Marseille) (Minibacterium massiliensis).